Here is a 331-residue protein sequence, read N- to C-terminus: Syntaxin-43 (331 aa).

The Cytoplasmic portion of the chain corresponds to 1-305; the sequence is MATRNRTLLF…KAERTQRQGG (305 aa). Disordered regions lie at residues 20 to 45 and 59 to 80; these read VRAP…KSGL and PNRS…GTIT. Polar residues predominate over residues 31 to 40; it reads TLTEHNSLTG. Positions 124-154 form a coiled coil; it reads KEDQHQIETLTQEVTFLLKKSEKQLQRLSAA. The 63-residue stretch at 235-297 folds into the t-SNARE coiled-coil homology domain; the sequence is EEISIEREKE…DDGLKQLQKA (63 aa). Residues 306-326 form a helical; Anchor for type IV membrane protein membrane-spanning segment; it reads MVMCASVLVILCFIMLVLLIL. Residues 327–331 are Vesicular-facing; sequence KEILL.

The protein belongs to the syntaxin family. Part of the t-SNARE complex. As to expression, expressed at low levels in roots, stems, flowers and leaves.

The protein resides in the golgi apparatus. It localises to the trans-Golgi network membrane. Contributes to the regulation of secretory and vacuolar transport pathways in the post-Golgi network, and to the maintenance of the Golgi apparatus and trans-Golgi network (TGN) morphologies. Vesicle trafficking protein that functions in the secretory pathway and mediates liposome fusion. Required for extracellular resistance responses to a fungal pathogen. Also involved in the protection of chloroplasts from salicylic acid-dependent biotic stress. The sequence is that of Syntaxin-43 from Arabidopsis thaliana (Mouse-ear cress).